The sequence spans 332 residues: Fructose-1,6-bisphosphatase class 1 (332 aa).

Mg(2+) contacts are provided by E89, D110, L112, and D113. Residues 113–116 (DGSS), N206, Y239, 257–259 (YLY), and K269 contribute to the substrate site. E275 is a binding site for Mg(2+).

It belongs to the FBPase class 1 family. In terms of assembly, homotetramer. Mg(2+) serves as cofactor.

Its subcellular location is the cytoplasm. The enzyme catalyses beta-D-fructose 1,6-bisphosphate + H2O = beta-D-fructose 6-phosphate + phosphate. The protein operates within carbohydrate biosynthesis; gluconeogenesis. This Citrobacter koseri (strain ATCC BAA-895 / CDC 4225-83 / SGSC4696) protein is Fructose-1,6-bisphosphatase class 1.